A 41-amino-acid chain; its full sequence is Large ribosomal subunit protein bL36 (41 aa).

Belongs to the bacterial ribosomal protein bL36 family.

The polypeptide is Large ribosomal subunit protein bL36 (Rhodopseudomonas palustris (strain TIE-1)).